Here is a 384-residue protein sequence, read N- to C-terminus: MPENYTPAAAATGTWTEEEIRHQPRAWIRSLTNIDALRSALNNFLEPLLRKENLRIILTGAGTSAFIGDIIAPWLASHTGKNFSAVPTTDLVTNPMDYLNPAHPLLLISFGRSGNSPESVAAVELANQFVPECYHLPITCNEAGALYQNAINSDNAFALLMPAETHDRGFAMTSSITTMMASCLAVFAPETINSQTFRDVADRCQAILTSLGDFSEGVFGYAPWKRIVYLGSGGLQGAARESALKVLELTAGKLAAFYDSPTGFRHGPKSLVDDETLVVVFVSSHPYTRQYDLDLLAELRRDNQAMRVIAIAAESSDIVAAGPHIILPPSRHFIDVEQAFCFLMYAQTFALMQSLHMGNTPDTPSASGTVNRVVQGVIIHPWQA.

SIS domains are found at residues 45-197 and 215-364; these read LEPL…SQTF and SEGV…PDTP.

This sequence belongs to the SIS family. AgaS subfamily.

It carries out the reaction D-galactosamine 6-phosphate + H2O = D-tagatopyranose 1-phosphate + NH4(+). Its function is as follows. Catalyzes the isomerization-deamination of galactosamine 6-phosphate to form tagatofuranose 6-phosphate and ammonium ion. The sequence is that of Putative D-galactosamine-6-phosphate deaminase AgaS (agaS) from Escherichia coli (strain K12).